The sequence spans 239 residues: tRNA (guanine-N(7)-)-methyltransferase (239 aa).

Residues Glu69, Glu94, Asp121, and Asp144 each coordinate S-adenosyl-L-methionine. Asp144 is an active-site residue. Residues Lys148, Asp180, and 217–220 each bind substrate; that span reads TKFE.

It belongs to the class I-like SAM-binding methyltransferase superfamily. TrmB family. Monomer.

The enzyme catalyses guanosine(46) in tRNA + S-adenosyl-L-methionine = N(7)-methylguanosine(46) in tRNA + S-adenosyl-L-homocysteine. It participates in tRNA modification; N(7)-methylguanine-tRNA biosynthesis. Catalyzes the formation of N(7)-methylguanine at position 46 (m7G46) in tRNA. This is tRNA (guanine-N(7)-)-methyltransferase from Buchnera aphidicola subsp. Acyrthosiphon pisum (strain 5A).